Reading from the N-terminus, the 385-residue chain is Probable protein phosphatase 2C 38 (385 aa).

Positions 46–357 (VAGEFSMSVI…DDITVIVVFL (312 aa)) constitute a PPM-type phosphatase domain. Ser77 carries the post-translational modification Phosphoserine. Positions 88, 89, 289, and 348 each coordinate Mn(2+).

The protein belongs to the PP2C family. Interacts with BIK1. It depends on Mg(2+) as a cofactor. Mn(2+) serves as cofactor. Post-translationally, phosphorylation at Ser-77 induces dissociation of PP2C38 from BIK1.

It localises to the cell membrane. The enzyme catalyses O-phospho-L-seryl-[protein] + H2O = L-seryl-[protein] + phosphate. It catalyses the reaction O-phospho-L-threonyl-[protein] + H2O = L-threonyl-[protein] + phosphate. Functionally, may dephosphorylate and repress plasma membrane H(+)-ATPases (PM H(+)-ATPases, e.g. AHA1 and AHA2), thus influencing negatively plant growth and fitness. Involved in pathogen-associated molecular pattern (PAMP)-triggered immunity (PTI) signaling. Negatively regulates immune responses by controlling the phosphorylation and activation status of BIK1, a central rate-limiting kinase in PTI signaling. Impairs the phosphorylation of the NADPH oxidase RBOHD by BIK1. The protein is Probable protein phosphatase 2C 38 of Arabidopsis thaliana (Mouse-ear cress).